The following is a 145-amino-acid chain: Neuromedin-S (145 aa).

Positions 1–25 (MKYLAQFPSILAIYCFCLLQIPSSG) are cleaved as a signal peptide. 3 propeptides span residues 26–64 (FPRP…IYKR), 65–100 (FLFH…ADRR), and 101–103 (MKT). Position 136 is an asparagine amide (asparagine 136). The propeptide occupies 139 to 145 (NLDFDTW).

This sequence belongs to the NmU family.

It is found in the secreted. Implicated in the regulation of circadian rhythms through autocrine and/or paracrine actions. In Bos taurus (Bovine), this protein is Neuromedin-S (NMS).